The following is a 267-amino-acid chain: Undecaprenyl-diphosphatase (267 aa).

8 helical membrane passes run 1–21 (MSYF…FLPI), 39–59 (QGLA…VLYF), 83–103 (AKLA…GFVM), 111–131 (LRSA…LWYV), 149–169 (ALFI…RSGA), 189–209 (FLMS…KLVT), 218–238 (FLLT…HFFL), and 245–265 (GMTP…AFLL).

It belongs to the UppP family.

It is found in the cell inner membrane. It catalyses the reaction di-trans,octa-cis-undecaprenyl diphosphate + H2O = di-trans,octa-cis-undecaprenyl phosphate + phosphate + H(+). Catalyzes the dephosphorylation of undecaprenyl diphosphate (UPP). Confers resistance to bacitracin. This chain is Undecaprenyl-diphosphatase, found in Vibrio cholerae serotype O1 (strain ATCC 39315 / El Tor Inaba N16961).